The following is a 218-amino-acid chain: Large ribosomal subunit protein bL25 (218 aa).

The interval 187 to 218 is disordered; it reads SATAAVEEAKEDGAPEESAQGQGAAEAQETNK. Residues 202–218 show a composition bias toward low complexity; it reads EESAQGQGAAEAQETNK.

It belongs to the bacterial ribosomal protein bL25 family. CTC subfamily. In terms of assembly, part of the 50S ribosomal subunit; part of the 5S rRNA/L5/L18/L25 subcomplex. Contacts the 5S rRNA. Binds to the 5S rRNA independently of L5 and L18.

Its function is as follows. This is one of the proteins that binds to the 5S RNA in the ribosome where it forms part of the central protuberance. The polypeptide is Large ribosomal subunit protein bL25 (Anaplasma marginale (strain St. Maries)).